The primary structure comprises 520 residues: Glucose-1-phosphate adenylyltransferase small subunit, chloroplastic (520 aa).

The transit peptide at 1 to 71 (MASVSAIGVL…RNPIIVSPKA (71 aa)) directs the protein to the chloroplast.

The protein belongs to the bacterial/plant glucose-1-phosphate adenylyltransferase family. Heterotetramer. Leaves.

The protein resides in the plastid. The protein localises to the chloroplast. The enzyme catalyses alpha-D-glucose 1-phosphate + ATP + H(+) = ADP-alpha-D-glucose + diphosphate. The protein operates within glycan biosynthesis; starch biosynthesis. Its activity is regulated as follows. Activated by 3'phosphoglycerate, inhibited by orthophosphate. Allosteric regulation. This protein plays a role in synthesis of starch. It catalyzes the synthesis of the activated glycosyl donor, ADP-glucose from Glc-1-P and ATP. The polypeptide is Glucose-1-phosphate adenylyltransferase small subunit, chloroplastic (APS1) (Arabidopsis thaliana (Mouse-ear cress)).